The chain runs to 493 residues: Probable cytosol aminopeptidase (493 aa).

2 residues coordinate Mn(2+): Lys259 and Asp264. Lys271 is a catalytic residue. 3 residues coordinate Mn(2+): Asp282, Asp341, and Glu343. Residue Arg345 is part of the active site.

Belongs to the peptidase M17 family. Mn(2+) serves as cofactor.

It localises to the cytoplasm. The catalysed reaction is Release of an N-terminal amino acid, Xaa-|-Yaa-, in which Xaa is preferably Leu, but may be other amino acids including Pro although not Arg or Lys, and Yaa may be Pro. Amino acid amides and methyl esters are also readily hydrolyzed, but rates on arylamides are exceedingly low.. It carries out the reaction Release of an N-terminal amino acid, preferentially leucine, but not glutamic or aspartic acids.. Presumably involved in the processing and regular turnover of intracellular proteins. Catalyzes the removal of unsubstituted N-terminal amino acids from various peptides. This chain is Probable cytosol aminopeptidase, found in Bacillus cytotoxicus (strain DSM 22905 / CIP 110041 / 391-98 / NVH 391-98).